The following is a 156-amino-acid chain: MNIHFIVVGQKMPGWVQTGYAEYAKRLPKACTLKLVELPMATRGKSGSVAQYKAEEAKRILSAVPKGAKLIVLDEKGQELTTVQFSQKLDDWLGSGQDVALIVGGPDGLDSSLIQQAEWKWGLSKLTLPHPLVRVMVAEQIYRAWSVLQNHPYHRE.

Residues leucine 73, glycine 104, and 123–128 (LSKLTL) contribute to the S-adenosyl-L-methionine site.

Belongs to the RNA methyltransferase RlmH family. As to quaternary structure, homodimer.

The protein localises to the cytoplasm. It carries out the reaction pseudouridine(1915) in 23S rRNA + S-adenosyl-L-methionine = N(3)-methylpseudouridine(1915) in 23S rRNA + S-adenosyl-L-homocysteine + H(+). Specifically methylates the pseudouridine at position 1915 (m3Psi1915) in 23S rRNA. This chain is Ribosomal RNA large subunit methyltransferase H, found in Hydrogenovibrio crunogenus (strain DSM 25203 / XCL-2) (Thiomicrospira crunogena).